We begin with the raw amino-acid sequence, 275 residues long: Dolichyl-diphosphooligosaccharide--protein glycosyltransferase subunit delta (275 aa).

The signal sequence occupies residues 1-18; sequence MKTSVFIAIFNLLVCALA. Transmembrane regions (helical) follow at residues 179-199, 214-234, and 241-261; these read VFII…VGFI, VQLL…LNFV, and SIFT…YFGV.

This sequence belongs to the SWP1 family. Component of the oligosaccharyltransferase (OST) complex.

The protein resides in the endoplasmic reticulum membrane. It functions in the pathway protein modification; protein glycosylation. Functionally, subunit of the oligosaccharyl transferase (OST) complex that catalyzes the initial transfer of a defined glycan (Glc(3)Man(9)GlcNAc(2) in eukaryotes) from the lipid carrier dolichol-pyrophosphate to an asparagine residue within an Asn-X-Ser/Thr consensus motif in nascent polypeptide chains, the first step in protein N-glycosylation. N-glycosylation occurs cotranslationally and the complex associates with the Sec61 complex at the channel-forming translocon complex that mediates protein translocation across the endoplasmic reticulum (ER). All subunits are required for a maximal enzyme activity. Plays a role in cell wall integrity and in engulfment by macrophages. This Candida albicans (strain SC5314 / ATCC MYA-2876) (Yeast) protein is Dolichyl-diphosphooligosaccharide--protein glycosyltransferase subunit delta.